A 379-amino-acid polypeptide reads, in one-letter code: Dual-specificity RNA methyltransferase RlmN (379 aa).

The Proton acceptor role is filled by Glu95. Residues 101–345 (EETRGTLCVS…TTVRKTRGDD (245 aa)) enclose the Radical SAM core domain. An intrachain disulfide couples Cys108 to Cys350. 3 residues coordinate [4Fe-4S] cluster: Cys115, Cys119, and Cys122. S-adenosyl-L-methionine contacts are provided by residues 176–177 (GE), Ser208, 230–232 (SLH), and Asn307. Cys350 acts as the S-methylcysteine intermediate in catalysis.

The protein belongs to the radical SAM superfamily. RlmN family. Requires [4Fe-4S] cluster as cofactor.

The protein localises to the cytoplasm. It carries out the reaction adenosine(2503) in 23S rRNA + 2 reduced [2Fe-2S]-[ferredoxin] + 2 S-adenosyl-L-methionine = 2-methyladenosine(2503) in 23S rRNA + 5'-deoxyadenosine + L-methionine + 2 oxidized [2Fe-2S]-[ferredoxin] + S-adenosyl-L-homocysteine. The enzyme catalyses adenosine(37) in tRNA + 2 reduced [2Fe-2S]-[ferredoxin] + 2 S-adenosyl-L-methionine = 2-methyladenosine(37) in tRNA + 5'-deoxyadenosine + L-methionine + 2 oxidized [2Fe-2S]-[ferredoxin] + S-adenosyl-L-homocysteine. Functionally, specifically methylates position 2 of adenine 2503 in 23S rRNA and position 2 of adenine 37 in tRNAs. m2A2503 modification seems to play a crucial role in the proofreading step occurring at the peptidyl transferase center and thus would serve to optimize ribosomal fidelity. The chain is Dual-specificity RNA methyltransferase RlmN from Burkholderia lata (strain ATCC 17760 / DSM 23089 / LMG 22485 / NCIMB 9086 / R18194 / 383).